The following is a 63-amino-acid chain: Large ribosomal subunit protein uL29 (63 aa).

Belongs to the universal ribosomal protein uL29 family.

In Bordetella pertussis (strain Tohama I / ATCC BAA-589 / NCTC 13251), this protein is Large ribosomal subunit protein uL29.